A 462-amino-acid chain; its full sequence is Transcription factor-like protein EUC1 (462 aa).

2 disordered regions span residues 11–43 and 66–97; these read GFGG…TTSP and RPTD…GRIK. Phosphoserine occurs at positions 17 and 23. Residues 26–35 show a composition bias toward basic and acidic residues; sequence DSERRNHDLG. A homodimerization region region spans residues 81-140; the sequence is SASATEPTNRIGPGRIKETPETNFNAFLIAQLTRMEEQNANLKEEISLMKKEQELFFLEN. Residues 105-135 adopt a coiled-coil conformation; that stretch reads NAFLIAQLTRMEEQNANLKEEISLMKKEQEL. Disordered stretches follow at residues 190–214 and 226–289; these read QEAA…STNW and GDPR…RNRR. Over residues 197-214 the composition is skewed to polar residues; sequence NPSTSTQAHQSQSRSTNW. Residue K231 forms a Glycyl lysine isopeptide (Lys-Gly) (interchain with G-Cter in SUMO) linkage. S237 and S249 each carry phosphoserine. The segment covering 240–251 has biased composition (acidic residues); the sequence is ENGEYDGNESDE. Residues 252–282 are compositionally biased toward polar residues; it reads NATTRNLPLNNPDSVSNADDSNNQLDGTGNE. Phosphothreonine is present on T254. The segment at 296–385 is GCR1 DNA-binding region; it reads YKLNRAIQNV…QAIKVVENIR (90 aa). Positions 441–455 are enriched in polar residues; it reads SLQQPHSIPNSSTGT. A disordered region spans residues 441–462; sequence SLQQPHSIPNSSTGTPEHDQDT.

Homodimer. Interacts with SLX5. Sumoylated at Lys-231 and subsequently ubiquitinated by the SUMO-targeted ubiquitin ligase (STUbL) complex SLX5/SLX8.

The protein localises to the chromosome. Functionally, transcription factor-like protein that binds to specific DNA motifs called ub-HS-motif associated with several locations where proteins other than histone H2B are ubiquitinated (ub-hotspots). Ubiquitination at these sites depends on the SUMO-targeted ubiquitin ligase (STUbL) complex SLX5/SLX8 and protein turnover on the CDC48 segregase. UBC9, SIZ1, or SIZ2 sumoylate DNA-bound EUC1 to stabilize its DNA-binding. Sumoylated EUC1 acts a cofactor required for the recruitment of the SLX5/SLX8 STUbL complex via specific contacts between EUC1 and SLX5, as well as an additional SUMO-mediated interaction. SLX5/SLX8 then ubiquitinates EUC1 and presumably other targets at ub-hotspots, and the CDC48/UFD1/NPL4 complex, together with UBX4 and UBX5, removes Lys-48-linked ubiquitinated proteins from chromatin. Ubiquitinated proteins could be either degraded by the proteasome or recycled by deubiquitination. EUC1 itself does not seem to underlie extensive turnover, as it is a very stable protein. EUC1 is able to act as a transcription factor, but its function at ub-hotspots does not seem to depend on this ability. EUC1-mediated ub-hotspots are crucial during stress responses when gene expression control is impaired. The protein is Transcription factor-like protein EUC1 of Saccharomyces cerevisiae (strain ATCC 204508 / S288c) (Baker's yeast).